A 150-amino-acid polypeptide reads, in one-letter code: MNIFLSKFINNNIDKKGRVSVPANYRAVLGKEAFNGIIAYPSIRNNCIEACGISHIEKLRQMIESLDPYSEERDAFETIIFGEAVQLSFDGEGRVILPASLMQHAGIEDQVCFVGKGVIFEIWQPQNFKDYLASAQKLAHEKRLTLRNTN.

2 SpoVT-AbrB domains span residues 8-55 (FINN…GISH) and 84-127 (AVQL…QPQN).

It belongs to the MraZ family. In terms of assembly, forms oligomers.

Its subcellular location is the cytoplasm. It is found in the nucleoid. This is Transcriptional regulator MraZ from Rickettsia bellii (strain OSU 85-389).